The chain runs to 380 residues: Dynactin subunit 2 (380 aa).

The disordered stretch occupies residues 1–40 (MADPKFQNLPGIAYDQPDVYETPDDPETDTSDYYEEEPEN). Residues 21–40 (ETPDDPETDTSDYYEEEPEN) are compositionally biased toward acidic residues. 2 coiled-coil regions span residues 100–135 (VQKC…QSYD) and 353–377 (ETFA…TAIS).

This sequence belongs to the dynactin subunit 2 family. Subunit of dynactin, a multiprotein complex associated with dynein.

The protein localises to the cytoplasm. It localises to the cytoskeleton. It is found in the membrane. Its function is as follows. Modulates cytoplasmic dynein binding to an organelle, and plays a role in prometaphase chromosome alignment and spindle organization during mitosis. May play a role in synapse formation during brain development. The chain is Dynactin subunit 2 from Drosophila pseudoobscura pseudoobscura (Fruit fly).